Reading from the N-terminus, the 378-residue chain is Peptide chain release factor RF2 (378 aa).

Position 253 is an N5-methylglutamine (Gln253).

The protein belongs to the prokaryotic/mitochondrial release factor family. Interacts with the ribosome. Interacts with ribosomal protein L11. Recruited to stalled E.coli ribosomes by E.coli ArfA.

It localises to the cytoplasm. Its function is as follows. Peptide chain release factor 2 directs the termination of translation in response to the peptide chain termination codons UGA and UAA. In endogenous ribosomes interacts with P-site tRNA and 23S rRNA. In the presence of truncated mRNA in the 70S ribosome, ArfA and RF2 interact such that the GGQ peptide hydrolysis motif of RF2 rises into the peptidyl-transferase center and releases the ribosome. Recruited to stalled E.coli 70S ribosomes by E.coli ArfA, but cannot be functionally accomodated in the peptidyl-transferase center. Note T.thermophilus probably does not encode arfA. This is Peptide chain release factor RF2 (prfB) from Thermus thermophilus (strain ATCC 27634 / DSM 579 / HB8).